We begin with the raw amino-acid sequence, 471 residues long: 3-isopropylmalate dehydratase large subunit (471 aa).

The [4Fe-4S] cluster site is built by Cys-347, Cys-407, and Cys-410.

The protein belongs to the aconitase/IPM isomerase family. LeuC type 1 subfamily. In terms of assembly, heterodimer of LeuC and LeuD. [4Fe-4S] cluster serves as cofactor.

The catalysed reaction is (2R,3S)-3-isopropylmalate = (2S)-2-isopropylmalate. It functions in the pathway amino-acid biosynthesis; L-leucine biosynthesis; L-leucine from 3-methyl-2-oxobutanoate: step 2/4. Its function is as follows. Catalyzes the isomerization between 2-isopropylmalate and 3-isopropylmalate, via the formation of 2-isopropylmaleate. In Vibrio parahaemolyticus serotype O3:K6 (strain RIMD 2210633), this protein is 3-isopropylmalate dehydratase large subunit.